Reading from the N-terminus, the 236-residue chain is Phosphoribosylaminoimidazole-succinocarboxamide synthase (236 aa).

It belongs to the SAICAR synthetase family.

The enzyme catalyses 5-amino-1-(5-phospho-D-ribosyl)imidazole-4-carboxylate + L-aspartate + ATP = (2S)-2-[5-amino-1-(5-phospho-beta-D-ribosyl)imidazole-4-carboxamido]succinate + ADP + phosphate + 2 H(+). Its pathway is purine metabolism; IMP biosynthesis via de novo pathway; 5-amino-1-(5-phospho-D-ribosyl)imidazole-4-carboxamide from 5-amino-1-(5-phospho-D-ribosyl)imidazole-4-carboxylate: step 1/2. This chain is Phosphoribosylaminoimidazole-succinocarboxamide synthase, found in Chlorobium limicola (strain DSM 245 / NBRC 103803 / 6330).